A 121-amino-acid chain; its full sequence is Large ribosomal subunit protein uL18 (121 aa).

It belongs to the universal ribosomal protein uL18 family. In terms of assembly, part of the 50S ribosomal subunit; part of the 5S rRNA/L5/L18/L25 subcomplex. Contacts the 5S and 23S rRNAs.

Its function is as follows. This is one of the proteins that bind and probably mediate the attachment of the 5S RNA into the large ribosomal subunit, where it forms part of the central protuberance. This Bordetella avium (strain 197N) protein is Large ribosomal subunit protein uL18.